The following is a 477-amino-acid chain: Salivary plasminogen activator alpha 2 (477 aa).

An N-terminal signal peptide occupies residues Met-1–Arg-36. Residues Val-40 to Val-82 enclose the Fibronectin type-I domain. Cystine bridges form between Cys-42/Cys-72, Cys-70/Cys-79, Cys-87/Cys-98, Cys-92/Cys-109, Cys-111/Cys-120, Cys-128/Cys-209, Cys-149/Cys-191, Cys-180/Cys-204, Cys-214/Cys-345, Cys-257/Cys-273, Cys-265/Cys-334, Cys-359/Cys-434, Cys-391/Cys-407, and Cys-424/Cys-452. The EGF-like domain occupies Pro-83–Glu-121. Positions Cys-128–Cys-209 constitute a Kringle domain. N-linked (GlcNAc...) asparagine glycosylation occurs at Asn-185. One can recognise a Peptidase S1 domain in the interval Ser-226 to Arg-476. Active-site charge relay system residues include His-272 and Asp-321. The N-linked (GlcNAc...) asparagine glycan is linked to Asn-398. Ser-428 acts as the Charge relay system in catalysis.

The protein belongs to the peptidase S1 family. In terms of assembly, monomer.

The protein resides in the secreted. It catalyses the reaction Specific cleavage of Arg-|-Val bond in plasminogen to form plasmin.. Activity toward plasminogen is stimulated in the presence of fibrin I. In terms of biological role, probably essential to support the feeding habits of this exclusively haematophagous animal. Probable potent thrombolytic agent. The protein is Salivary plasminogen activator alpha 2 of Desmodus rotundus (Vampire bat).